Reading from the N-terminus, the 306-residue chain is UDP-3-O-acyl-N-acetylglucosamine deacetylase (306 aa).

Positions 78, 237, and 241 each coordinate Zn(2+). The active-site Proton donor is His-264.

Belongs to the LpxC family. The cofactor is Zn(2+).

It catalyses the reaction a UDP-3-O-[(3R)-3-hydroxyacyl]-N-acetyl-alpha-D-glucosamine + H2O = a UDP-3-O-[(3R)-3-hydroxyacyl]-alpha-D-glucosamine + acetate. Its pathway is glycolipid biosynthesis; lipid IV(A) biosynthesis; lipid IV(A) from (3R)-3-hydroxytetradecanoyl-[acyl-carrier-protein] and UDP-N-acetyl-alpha-D-glucosamine: step 2/6. In terms of biological role, catalyzes the hydrolysis of UDP-3-O-myristoyl-N-acetylglucosamine to form UDP-3-O-myristoylglucosamine and acetate, the committed step in lipid A biosynthesis. The polypeptide is UDP-3-O-acyl-N-acetylglucosamine deacetylase (Aromatoleum aromaticum (strain DSM 19018 / LMG 30748 / EbN1) (Azoarcus sp. (strain EbN1))).